An 855-amino-acid chain; its full sequence is Putative AAA family ATPase R476 (855 aa).

Residues 1 to 13 show a composition bias toward basic and acidic residues; it reads MNKRDFSELKNSE. Residues 1 to 37 form a disordered region; sequence MNKRDFSELKNSESSEESSLVSSTETVRSSKRNKKFH. The segment covering 17-27 has biased composition (low complexity); that stretch reads ESSLVSSTETV. 610–617 is an ATP binding site; that stretch reads GPPGTGKT.

It belongs to the AAA ATPase family.

This Acanthamoeba polyphaga mimivirus (APMV) protein is Putative AAA family ATPase R476.